The primary structure comprises 213 residues: Thiamine-phosphate synthase (213 aa).

4-amino-2-methyl-5-(diphosphooxymethyl)pyrimidine contacts are provided by residues 40–44 and Asn-75; that span reads QFREK. Asp-76 and Asp-95 together coordinate Mg(2+). 4-amino-2-methyl-5-(diphosphooxymethyl)pyrimidine is bound at residue Ser-113. A 2-[(2R,5Z)-2-carboxy-4-methylthiazol-5(2H)-ylidene]ethyl phosphate-binding site is contributed by 139–141; sequence TPS. Residue Lys-142 coordinates 4-amino-2-methyl-5-(diphosphooxymethyl)pyrimidine. 2-[(2R,5Z)-2-carboxy-4-methylthiazol-5(2H)-ylidene]ethyl phosphate is bound by residues Gly-171 and 191–192; that span reads IS.

The protein belongs to the thiamine-phosphate synthase family. Requires Mg(2+) as cofactor.

It carries out the reaction 2-[(2R,5Z)-2-carboxy-4-methylthiazol-5(2H)-ylidene]ethyl phosphate + 4-amino-2-methyl-5-(diphosphooxymethyl)pyrimidine + 2 H(+) = thiamine phosphate + CO2 + diphosphate. The enzyme catalyses 2-(2-carboxy-4-methylthiazol-5-yl)ethyl phosphate + 4-amino-2-methyl-5-(diphosphooxymethyl)pyrimidine + 2 H(+) = thiamine phosphate + CO2 + diphosphate. It catalyses the reaction 4-methyl-5-(2-phosphooxyethyl)-thiazole + 4-amino-2-methyl-5-(diphosphooxymethyl)pyrimidine + H(+) = thiamine phosphate + diphosphate. It functions in the pathway cofactor biosynthesis; thiamine diphosphate biosynthesis; thiamine phosphate from 4-amino-2-methyl-5-diphosphomethylpyrimidine and 4-methyl-5-(2-phosphoethyl)-thiazole: step 1/1. In terms of biological role, condenses 4-methyl-5-(beta-hydroxyethyl)thiazole monophosphate (THZ-P) and 2-methyl-4-amino-5-hydroxymethyl pyrimidine pyrophosphate (HMP-PP) to form thiamine monophosphate (TMP). The polypeptide is Thiamine-phosphate synthase (Staphylococcus aureus (strain bovine RF122 / ET3-1)).